The primary structure comprises 548 residues: Chaperonin GroEL (548 aa).

ATP-binding positions include 30 to 33, Lys-51, 87 to 91, Gly-415, 479 to 481, and Asp-495; these read TLGP, DGTTT, and NAA. Residues 525–548 form a disordered region; that stretch reads PKEDKTSDASSSPAGGMGGMGGMM. Over residues 539-548 the composition is skewed to gly residues; that stretch reads GGMGGMGGMM.

The protein belongs to the chaperonin (HSP60) family. In terms of assembly, forms a cylinder of 14 subunits composed of two heptameric rings stacked back-to-back. Interacts with the co-chaperonin GroES.

The protein resides in the cytoplasm. The catalysed reaction is ATP + H2O + a folded polypeptide = ADP + phosphate + an unfolded polypeptide.. Together with its co-chaperonin GroES, plays an essential role in assisting protein folding. The GroEL-GroES system forms a nano-cage that allows encapsulation of the non-native substrate proteins and provides a physical environment optimized to promote and accelerate protein folding. The chain is Chaperonin GroEL from Buchnera aphidicola subsp. Rhopalosiphum maidis.